The primary structure comprises 382 residues: Dual-specificity RNA methyltransferase RlmN (382 aa).

Residue Glu-94 is the Proton acceptor of the active site. The 237-residue stretch at 100–336 folds into the Radical SAM core domain; that stretch reads EANRGTLCVS…NTITRKTRGD (237 aa). A disulfide bridge connects residues Cys-107 and Cys-342. Residues Cys-114, Cys-118, and Cys-121 each coordinate [4Fe-4S] cluster. S-adenosyl-L-methionine contacts are provided by residues 168–169, Ser-200, 222–224, and Asn-299; these read GE and SLH. Cys-342 serves as the catalytic S-methylcysteine intermediate.

The protein belongs to the radical SAM superfamily. RlmN family. It depends on [4Fe-4S] cluster as a cofactor.

The protein resides in the cytoplasm. The enzyme catalyses adenosine(2503) in 23S rRNA + 2 reduced [2Fe-2S]-[ferredoxin] + 2 S-adenosyl-L-methionine = 2-methyladenosine(2503) in 23S rRNA + 5'-deoxyadenosine + L-methionine + 2 oxidized [2Fe-2S]-[ferredoxin] + S-adenosyl-L-homocysteine. The catalysed reaction is adenosine(37) in tRNA + 2 reduced [2Fe-2S]-[ferredoxin] + 2 S-adenosyl-L-methionine = 2-methyladenosine(37) in tRNA + 5'-deoxyadenosine + L-methionine + 2 oxidized [2Fe-2S]-[ferredoxin] + S-adenosyl-L-homocysteine. Functionally, specifically methylates position 2 of adenine 2503 in 23S rRNA and position 2 of adenine 37 in tRNAs. m2A2503 modification seems to play a crucial role in the proofreading step occurring at the peptidyl transferase center and thus would serve to optimize ribosomal fidelity. The protein is Dual-specificity RNA methyltransferase RlmN of Legionella pneumophila subsp. pneumophila (strain Philadelphia 1 / ATCC 33152 / DSM 7513).